The primary structure comprises 311 residues: Aspartate carbamoyltransferase catalytic subunit (311 aa).

Carbamoyl phosphate-binding residues include arginine 59 and threonine 60. L-aspartate is bound at residue lysine 87. Arginine 109, histidine 139, and glutamine 142 together coordinate carbamoyl phosphate. L-aspartate contacts are provided by arginine 172 and arginine 224. Residues alanine 265 and proline 266 each contribute to the carbamoyl phosphate site.

This sequence belongs to the aspartate/ornithine carbamoyltransferase superfamily. ATCase family. Heterododecamer (2C3:3R2) of six catalytic PyrB chains organized as two trimers (C3), and six regulatory PyrI chains organized as three dimers (R2).

It catalyses the reaction carbamoyl phosphate + L-aspartate = N-carbamoyl-L-aspartate + phosphate + H(+). Its pathway is pyrimidine metabolism; UMP biosynthesis via de novo pathway; (S)-dihydroorotate from bicarbonate: step 2/3. Catalyzes the condensation of carbamoyl phosphate and aspartate to form carbamoyl aspartate and inorganic phosphate, the committed step in the de novo pyrimidine nucleotide biosynthesis pathway. The polypeptide is Aspartate carbamoyltransferase catalytic subunit (Streptococcus equi subsp. zooepidemicus (strain MGCS10565)).